Consider the following 259-residue polypeptide: Pycsar effector protein RsmPycTIR (259 aa).

Residue 1–120 participates in a nucleoside 3',5'-cyclic phosphate binding; it reads MVGGDEVIAN…RRVHEDFSGR (120 aa). The segment at 126 to 229 is TIR-like; the sequence is LATGISRRTS…AEFQYQISSS (104 aa). The next 3 membrane-spanning stretches (helical) occupy residues 136-156, 169-189, and 234-254; these read GWNW…AIWY, VLLP…ADPV, and QATA…LFWI.

The protein resides in the cell inner membrane. It carries out the reaction NAD(+) + H2O = ADP-D-ribose + nicotinamide + H(+). In terms of biological role, pycsar (pyrimidine cyclase system for antiphage resistance) provides immunity against bacteriophage. The pyrimidine cyclase (PycC) synthesizes cyclic nucleotides in response to infection; these serve as specific second messenger signals. The signals activate the adjacent effector, leading to bacterial cell death and abortive phage infection. A clade B Pycsar system. The effector gene of a two-gene Pycsar system. Expression of this and adjacent uridylate cyclase RsmPycC (AC A0A1V0HUX5) probably confers resistance to bacteriophage. The genes are probably only expressed in response to bacteriophage infection. Probably only responds to cUMP (produced by its cognate NTP cyclase), it may act by degrading NAD(+) and/or by impairing membrane integrity. The protein is Pycsar effector protein RsmPycTIR of Rhodovulum sp. (strain MB263).